A 279-amino-acid polypeptide reads, in one-letter code: Probable endonuclease 4 (279 aa).

Zn(2+) is bound by residues His-74, His-112, Glu-147, Asp-180, His-183, His-214, Asp-227, His-229, and Glu-259.

It belongs to the AP endonuclease 2 family. It depends on Zn(2+) as a cofactor.

It carries out the reaction Endonucleolytic cleavage to 5'-phosphooligonucleotide end-products.. In terms of biological role, endonuclease IV plays a role in DNA repair. It cleaves phosphodiester bonds at apurinic or apyrimidinic (AP) sites, generating a 3'-hydroxyl group and a 5'-terminal sugar phosphate. The sequence is that of Probable endonuclease 4 from Mycoplasma mobile (strain ATCC 43663 / 163K / NCTC 11711) (Mesomycoplasma mobile).